The following is a 428-amino-acid chain: Delta-aminolevulinic acid dehydratase, chloroplastic (428 aa).

Lys-294 serves as the catalytic Schiff-base intermediate with substrate. 2 residues coordinate 5-aminolevulinate: Arg-304 and Lys-316. Glu-332 serves as a coordination point for Mg(2+). Residue Lys-347 is the Schiff-base intermediate with substrate of the active site. 5-aminolevulinate contacts are provided by Ser-373 and Tyr-412.

The protein belongs to the ALAD family. As to quaternary structure, homooctamer. Mg(2+) is required as a cofactor.

Its subcellular location is the plastid. The protein localises to the chloroplast. The enzyme catalyses 2 5-aminolevulinate = porphobilinogen + 2 H2O + H(+). The protein operates within porphyrin-containing compound metabolism; protoporphyrin-IX biosynthesis; coproporphyrinogen-III from 5-aminolevulinate: step 1/4. In terms of biological role, catalyzes an early step in the biosynthesis of tetrapyrroles. Binds two molecules of 5-aminolevulinate per subunit, each at a distinct site, and catalyzes their condensation to form porphobilinogen. This chain is Delta-aminolevulinic acid dehydratase, chloroplastic (HEMB), found in Hordeum vulgare (Barley).